We begin with the raw amino-acid sequence, 281 residues long: ATP phosphoribosyltransferase (281 aa).

Belongs to the ATP phosphoribosyltransferase family. Long subfamily. It depends on Mg(2+) as a cofactor.

The protein resides in the cytoplasm. The enzyme catalyses 1-(5-phospho-beta-D-ribosyl)-ATP + diphosphate = 5-phospho-alpha-D-ribose 1-diphosphate + ATP. Its pathway is amino-acid biosynthesis; L-histidine biosynthesis; L-histidine from 5-phospho-alpha-D-ribose 1-diphosphate: step 1/9. Feedback inhibited by histidine. Its function is as follows. Catalyzes the condensation of ATP and 5-phosphoribose 1-diphosphate to form N'-(5'-phosphoribosyl)-ATP (PR-ATP). Has a crucial role in the pathway because the rate of histidine biosynthesis seems to be controlled primarily by regulation of HisG enzymatic activity. The chain is ATP phosphoribosyltransferase from Corynebacterium diphtheriae (strain ATCC 700971 / NCTC 13129 / Biotype gravis).